The chain runs to 415 residues: Acetyl-CoA acetyltransferase 1 (415 aa).

Cys-99 (acyl-thioester intermediate) is an active-site residue. Lys-239 contributes to the CoA binding site. Residue Ala-256 coordinates K(+). Residue Ser-260 participates in CoA binding. Val-357 provides a ligand contact to K(+). Residues His-361 and Cys-391 each act as proton acceptor in the active site.

Belongs to the thiolase-like superfamily. Thiolase family. In terms of tissue distribution, expressed in the vascular system of roots, cotyledons, young leaves, fully expanded leaves, stems, flowers, and funiculi of siliques.

The protein resides in the cytoplasm. The protein localises to the peroxisome. It catalyses the reaction 2 acetyl-CoA = acetoacetyl-CoA + CoA. It functions in the pathway metabolic intermediate biosynthesis; (R)-mevalonate biosynthesis; (R)-mevalonate from acetyl-CoA: step 1/3. Its function is as follows. Catalyzes the condensation of two molecules of acetyl-CoA to produce acetoacetyl-CoA. This chain is Acetyl-CoA acetyltransferase 1, found in Arabidopsis thaliana (Mouse-ear cress).